The primary structure comprises 229 residues: Cytochrome c oxidase subunit 2 (229 aa).

The Mitochondrial intermembrane portion of the chain corresponds to 1-26; sequence MSTWANLGLQDSASPLMEQLIFFHDH. The helical transmembrane segment at 27-48 threads the bilayer; the sequence is ALLILVMITVLVGYLMFMLFFN. Residues 49-62 lie on the Mitochondrial matrix side of the membrane; it reads SYVNRFLLHGQLIE. Residues 63-82 traverse the membrane as a helical segment; it reads MIWTILPAIILLFIAMPSLR. At 83-229 the chain is on the mitochondrial intermembrane side; the sequence is LLYLLDEINE…IKWISNSVNS (147 aa). The Cu cation site is built by His161, Cys196, Glu198, Cys200, His204, and Met207. Mg(2+) is bound at residue Glu198.

It belongs to the cytochrome c oxidase subunit 2 family. Component of the cytochrome c oxidase (complex IV, CIV), a multisubunit enzyme composed of a catalytic core of 3 subunits and several supernumerary subunits. The complex exists as a monomer or a dimer and forms supercomplexes (SCs) in the inner mitochondrial membrane with ubiquinol-cytochrome c oxidoreductase (cytochrome b-c1 complex, complex III, CIII). Cu cation serves as cofactor.

The protein localises to the mitochondrion inner membrane. It carries out the reaction 4 Fe(II)-[cytochrome c] + O2 + 8 H(+)(in) = 4 Fe(III)-[cytochrome c] + 2 H2O + 4 H(+)(out). Its function is as follows. Component of the cytochrome c oxidase, the last enzyme in the mitochondrial electron transport chain which drives oxidative phosphorylation. The respiratory chain contains 3 multisubunit complexes succinate dehydrogenase (complex II, CII), ubiquinol-cytochrome c oxidoreductase (cytochrome b-c1 complex, complex III, CIII) and cytochrome c oxidase (complex IV, CIV), that cooperate to transfer electrons derived from NADH and succinate to molecular oxygen, creating an electrochemical gradient over the inner membrane that drives transmembrane transport and the ATP synthase. Cytochrome c oxidase is the component of the respiratory chain that catalyzes the reduction of oxygen to water. Electrons originating from reduced cytochrome c in the intermembrane space (IMS) are transferred via the dinuclear copper A center (CU(A)) of subunit 2 and heme A of subunit 1 to the active site in subunit 1, a binuclear center (BNC) formed by heme A3 and copper B (CU(B)). The BNC reduces molecular oxygen to 2 water molecules using 4 electrons from cytochrome c in the IMS and 4 protons from the mitochondrial matrix. The protein is Cytochrome c oxidase subunit 2 (mt:CoII) of Drosophila narragansett (Fruit fly).